The chain runs to 282 residues: Phenylethanolamine N-methyltransferase (282 aa).

Ser7 bears the Phosphoserine mark. Residues Tyr35, Tyr40, 79–80 (GS), Tyr85, Asp101, Asn106, 158–159 (DV), and Ala181 each bind S-adenosyl-L-methionine. The octopamine site is built by Glu219 and Asp267.

It catalyses the reaction phenylethanolamine + S-adenosyl-L-methionine = N-methylphenylethanolamine + S-adenosyl-L-homocysteine + H(+). The catalysed reaction is (R)-noradrenaline + S-adenosyl-L-methionine = (R)-adrenaline + S-adenosyl-L-homocysteine + H(+). It carries out the reaction (R)-normetanephrine + S-adenosyl-L-methionine = (R)-metanephrine + S-adenosyl-L-homocysteine + H(+). The enzyme catalyses (R)-octopamine + S-adenosyl-L-methionine = (R)-synephrine + S-adenosyl-L-homocysteine + H(+). It functions in the pathway catecholamine biosynthesis; (R)-adrenaline biosynthesis; (R)-adrenaline from (R)-noradrenaline: step 1/1. Inhibited by methyl methanethiosulfonate, phenylglyoxal, tetranitromethane and diethyl pyrocarbonate. Inhibited by 4-oxo-1,4-dihydro-quinoline-3,7-dicarboxylic acid, 4-(benzo[d][1,3]dioxol-5-ylamino)-4-oxobutanoic acid and 1,4-diaminonaphthalene-2,6-disulfonic acid. Functionally, catalyzes the transmethylation of nonepinephrine (noradrenaline) to form epinephrine (adrenaline), using S-adenosyl-L-methionine as the methyl donor. Other substrates include phenylethanolamine and octopamine. Also methylates normetanephrine. This Homo sapiens (Human) protein is Phenylethanolamine N-methyltransferase (PNMT).